The primary structure comprises 355 residues: Alpha-N-acetylneuraminide alpha-2,8-sialyltransferase (355 aa).

Residues 1–28 (MSPCGRALHTSRGAMAMLARKFPRTRLP) lie on the Cytoplasmic side of the membrane. A helical; Signal-anchor for type II membrane protein transmembrane segment spans residues 29–47 (VGASALCVVVLCWLYIFPV). The Lumenal portion of the chain corresponds to 48–355 (YRLPNEKEIV…CEEPSPQPTS (308 aa)). Residues N70 and N118 are each glycosylated (N-linked (GlcNAc...) asparagine). Disulfide bonds link C137-C286 and C151-C346. CMP-N-acetyl-beta-neuraminate-binding residues include N142 and N165. 2 N-linked (GlcNAc...) asparagine glycosylation sites follow: N213 and N244. CMP-N-acetyl-beta-neuraminate contacts are provided by S273, T274, G275, W295, and H309. The Proton donor/acceptor role is filled by H321.

It belongs to the glycosyltransferase 29 family.

The protein localises to the golgi apparatus membrane. The catalysed reaction is an N-acetyl-alpha-neuraminyl-(2-&gt;3)-beta-D-galactosyl derivative + CMP-N-acetyl-beta-neuraminate = an N-acetyl-alpha-neuraminyl-(2-&gt;8)-N-acetyl-alpha-neuraminyl-(2-&gt;3)-beta-D-galactosyl derivative + CMP + H(+). It carries out the reaction a ganglioside GM3 (d18:1(4E)) + CMP-N-acetyl-beta-neuraminate = a ganglioside GD3 (d18:1(4E)) + CMP + H(+). It catalyses the reaction a ganglioside GD3 (d18:1(4E)) + CMP-N-acetyl-beta-neuraminate = a ganglioside GT3 (d18:1(4E)) + CMP + H(+). The enzyme catalyses a ganglioside GD1a (d18:1(4E)) + CMP-N-acetyl-beta-neuraminate = a ganglioside GT1a (d18:1(4E)) + CMP + H(+). The catalysed reaction is a ganglioside GT1b (d18:1(4E)) + CMP-N-acetyl-beta-neuraminate = a ganglioside GQ1b (d18:1(4E)) + CMP + H(+). It carries out the reaction a ganglioside GM1b (d18:1(4E)) + CMP-N-acetyl-beta-neuraminate = a ganglioside GD1c (d18:1(4E)) + CMP + H(+). It catalyses the reaction a ganglioside GD3 + CMP-N-acetyl-beta-neuraminate = a ganglioside GT3 + CMP + H(+). The enzyme catalyses [alpha-N-acetylneuraminyl-(2-&gt;8)](n)-alpha-N-acetylneuraminyl-(2-&gt;8)-alpha-N-acetylneuraminyl-(2-&gt;3)-beta-D-galactosyl-(1-&gt;4)-beta-D-glucosyl-(1&lt;-&gt;1)-ceramide + CMP-N-acetyl-beta-neuraminate = [alpha-N-acetylneuraminyl-(2-&gt;8)](n+1)-alpha-N-acetylneuraminyl-(2-&gt;8)-alpha-N-acetylneuraminyl-(2-&gt;3)-beta-D-galactosyl-(1-&gt;4)-beta-D-glucosyl-(1&lt;-&gt;1)-ceramide + CMP + H(+). The protein operates within protein modification; protein glycosylation. Its pathway is lipid metabolism; sphingolipid metabolism. Its function is as follows. Catalyzes the addition of sialic acid in alpha 2,8-linkage to the sialic acid moiety of the ganglioside GM3 to form ganglioside GD3; gangliosides are a subfamily of complex glycosphingolipds that contain one or more residues of sialic acid. Can catalyze the addition of a second alpha-2,8- sialic acid to GD3 to form GT3. Can use GM1b, GD1a and GT1b as acceptor substrates to synthesize GD1c, GT1a and GQ1b respectively. The protein is Alpha-N-acetylneuraminide alpha-2,8-sialyltransferase of Mus musculus (Mouse).